The chain runs to 77 residues: DNA-directed RNA polymerase subunit omega (77 aa).

It belongs to the RNA polymerase subunit omega family. As to quaternary structure, the RNAP catalytic core consists of 2 alpha, 1 beta, 1 beta' and 1 omega subunit. When a sigma factor is associated with the core the holoenzyme is formed, which can initiate transcription.

It catalyses the reaction RNA(n) + a ribonucleoside 5'-triphosphate = RNA(n+1) + diphosphate. Its function is as follows. Promotes RNA polymerase assembly. Latches the N- and C-terminal regions of the beta' subunit thereby facilitating its interaction with the beta and alpha subunits. In Nitratidesulfovibrio vulgaris (strain ATCC 29579 / DSM 644 / CCUG 34227 / NCIMB 8303 / VKM B-1760 / Hildenborough) (Desulfovibrio vulgaris), this protein is DNA-directed RNA polymerase subunit omega.